Here is a 444-residue protein sequence, read N- to C-terminus: N-succinylarginine dihydrolase (444 aa).

Substrate-binding positions include 19–28, asparagine 110, and 137–138; these read SGLSFGNVAS and HR. Glutamate 174 is an active-site residue. Position 214 (arginine 214) interacts with substrate. The active site involves histidine 250. The substrate site is built by aspartate 252 and asparagine 362. Cysteine 368 acts as the Nucleophile in catalysis.

It belongs to the succinylarginine dihydrolase family. As to quaternary structure, homodimer.

The enzyme catalyses N(2)-succinyl-L-arginine + 2 H2O + 2 H(+) = N(2)-succinyl-L-ornithine + 2 NH4(+) + CO2. It participates in amino-acid degradation; L-arginine degradation via AST pathway; L-glutamate and succinate from L-arginine: step 2/5. Functionally, catalyzes the hydrolysis of N(2)-succinylarginine into N(2)-succinylornithine, ammonia and CO(2). This Photobacterium profundum (strain SS9) protein is N-succinylarginine dihydrolase.